A 425-amino-acid chain; its full sequence is UPF0597 protein KPN78578_43500 (425 aa).

Belongs to the UPF0597 family.

In Klebsiella pneumoniae subsp. pneumoniae (strain ATCC 700721 / MGH 78578), this protein is UPF0597 protein KPN78578_43500.